Reading from the N-terminus, the 565-residue chain is CTP synthase (565 aa).

An amidoligase domain region spans residues 1–272; the sequence is MARPKNVKHI…DKRVLKKLGI (272 aa). Ser18 contributes to the CTP binding site. Ser18 is a UTP binding site. 19-24 lines the ATP pocket; sequence SLGKGI. Tyr59 is an L-glutamine binding site. Asp76 serves as a coordination point for ATP. Asp76 and Glu146 together coordinate Mg(2+). Residues 153 to 155, 193 to 198, and Lys229 contribute to the CTP site; these read DIE and KTKPTQ. Residues 193–198 and Lys229 each bind UTP; that span reads KTKPTQ. A Glutamine amidotransferase type-1 domain is found at 299–543; it reads TIAVCGKYTE…VAAAKAFAFG (245 aa). Gly363 contacts L-glutamine. Cys390 (nucleophile; for glutamine hydrolysis) is an active-site residue. Residues 391–394, Glu414, and Arg471 each bind L-glutamine; that span reads LGMQ. Catalysis depends on residues His516 and Glu518.

It belongs to the CTP synthase family. Homotetramer.

It carries out the reaction UTP + L-glutamine + ATP + H2O = CTP + L-glutamate + ADP + phosphate + 2 H(+). The catalysed reaction is L-glutamine + H2O = L-glutamate + NH4(+). It catalyses the reaction UTP + NH4(+) + ATP = CTP + ADP + phosphate + 2 H(+). The protein operates within pyrimidine metabolism; CTP biosynthesis via de novo pathway; CTP from UDP: step 2/2. With respect to regulation, allosterically activated by GTP, when glutamine is the substrate; GTP has no effect on the reaction when ammonia is the substrate. The allosteric effector GTP functions by stabilizing the protein conformation that binds the tetrahedral intermediate(s) formed during glutamine hydrolysis. Inhibited by the product CTP, via allosteric rather than competitive inhibition. Functionally, catalyzes the ATP-dependent amination of UTP to CTP with either L-glutamine or ammonia as the source of nitrogen. Regulates intracellular CTP levels through interactions with the four ribonucleotide triphosphates. The chain is CTP synthase from Chlorobium phaeobacteroides (strain BS1).